Consider the following 222-residue polypeptide: Cyclin-U2-1 (222 aa).

The protein belongs to the cyclin family. Cyclin U/P subfamily. As to quaternary structure, interacts with CDKA-1. In terms of tissue distribution, expressed in roots, stems and flowers. Expressed in the shoot apex, leaf primordia and young leaves.

The chain is Cyclin-U2-1 (CYCU2-1) from Arabidopsis thaliana (Mouse-ear cress).